Reading from the N-terminus, the 371-residue chain is tRNA-specific 2-thiouridylase MnmA (371 aa).

Residues 13 to 20 (GMSGGVDS) and methionine 39 each bind ATP. Residues 99 to 101 (NPD) are interaction with target base in tRNA. The active-site Nucleophile is the cysteine 104. An intrachain disulfide couples cysteine 104 to cysteine 200. Glycine 128 lines the ATP pocket. The interval 150–152 (KDQ) is interaction with tRNA. Cysteine 200 functions as the Cysteine persulfide intermediate in the catalytic mechanism. An interaction with tRNA region spans residues 308–309 (RY).

It belongs to the MnmA/TRMU family.

It localises to the cytoplasm. It carries out the reaction S-sulfanyl-L-cysteinyl-[protein] + uridine(34) in tRNA + AH2 + ATP = 2-thiouridine(34) in tRNA + L-cysteinyl-[protein] + A + AMP + diphosphate + H(+). Catalyzes the 2-thiolation of uridine at the wobble position (U34) of tRNA, leading to the formation of s(2)U34. The chain is tRNA-specific 2-thiouridylase MnmA from Bacillus anthracis.